The chain runs to 420 residues: Protein BDLF2 (420 aa).

2 disordered regions span residues 1–21 and 64–129; these read MVDE…SREE and AAAV…GGQR. Residues 1–184 are Intravirion-facing; the sequence is MVDEQVAVEH…AETLAEPPRC (184 aa). Positions 90 to 108 are enriched in low complexity; the sequence is TKTNTQDQNQNQTTRTRTN. Residues 185 to 205 form a helical; Signal-anchor for type II membrane protein membrane-spanning segment; that stretch reads FMLSFVFIYYCCYLAFLALLA. The Virion surface portion of the chain corresponds to 206 to 420; that stretch reads FGFNPLFLPS…LEEVMYVMVQ (215 aa). 6 N-linked (GlcNAc...) asparagine; by host glycosylation sites follow: N258, N264, N300, N304, N371, and N384.

The protein belongs to the herpesviridae BDLF2 family. In terms of assembly, interacts with BMRF2.

The protein localises to the virion membrane. Rearranges cellular actin to increase intercellular contacts and thereby promote virus cell-to-cell spreading. Induce the outgrowth of long, branched plasma membrane fronds to create intercellular network for virion traffic. The fronds are actin based and RhoA-dependent. The chain is Protein BDLF2 from Homo sapiens (Human).